Reading from the N-terminus, the 688-residue chain is Glycine--tRNA ligase beta subunit (688 aa).

The protein belongs to the class-II aminoacyl-tRNA synthetase family. As to quaternary structure, tetramer of two alpha and two beta subunits.

The protein localises to the cytoplasm. The enzyme catalyses tRNA(Gly) + glycine + ATP = glycyl-tRNA(Gly) + AMP + diphosphate. The polypeptide is Glycine--tRNA ligase beta subunit (Desulforudis audaxviator (strain MP104C)).